We begin with the raw amino-acid sequence, 593 residues long: Probable tripeptidyl-peptidase SED3 (593 aa).

Residues 1–18 (MLLRWHSVIPLFLTMTVA) form the signal peptide. Positions 19 to 198 (LPNTYRTVVE…SLQVIYSSTN (180 aa)) are cleaved as a propeptide — removed in mature form. N-linked (GlcNAc...) asparagine glycosylation is found at asparagine 198, asparagine 204, asparagine 261, and asparagine 275. The Peptidase S53 domain maps to 206–592 (TITPRCLREL…RILAKIVQHM (387 aa)). Residues glutamate 282 and aspartate 286 each act as charge relay system in the active site. The N-linked (GlcNAc...) asparagine glycan is linked to asparagine 295. Serine 496 functions as the Charge relay system in the catalytic mechanism. Aspartate 538 and isoleucine 539 together coordinate Ca(2+). Asparagine 554 and asparagine 566 each carry an N-linked (GlcNAc...) asparagine glycan. Ca(2+) is bound by residues glycine 570 and aspartate 572.

It depends on Ca(2+) as a cofactor.

It is found in the secreted. Its subcellular location is the extracellular space. It carries out the reaction Release of an N-terminal tripeptide from a polypeptide.. In terms of biological role, secreted tripeptidyl-peptidase which degrades proteins at acidic pHs and is involved in virulence. This chain is Probable tripeptidyl-peptidase SED3 (SED3), found in Trichophyton verrucosum (strain HKI 0517).